The following is a 1124-amino-acid chain: Phytochrome A (1124 aa).

The segment covering 1-19 has biased composition (low complexity); sequence MSTTRPSQSSNNSGRSRNS. Residues 1–21 are disordered; sequence MSTTRPSQSSNNSGRSRNSAR. The GAF domain maps to 218–401; sequence SMERLCDTMV…VFAIHVNKEI (184 aa). Position 323 (Cys323) interacts with phytochromobilin. PAS domains follow at residues 617–687 and 750–821; these read VTSE…LQGE and DYKA…VNFG. The 220-residue stretch at 901-1120 folds into the Histidine kinase domain; it reads YMKRQIRNPL…ILSVELAAAH (220 aa).

This sequence belongs to the phytochrome family. Homodimer. In terms of processing, contains one covalently linked phytochromobilin chromophore.

Its function is as follows. Regulatory photoreceptor which exists in two forms that are reversibly interconvertible by light: the Pr form that absorbs maximally in the red region of the spectrum and the Pfr form that absorbs maximally in the far-red region. Photoconversion of Pr to Pfr induces an array of morphogenic responses, whereas reconversion of Pfr to Pr cancels the induction of those responses. Pfr controls the expression of a number of nuclear genes including those encoding the small subunit of ribulose-bisphosphate carboxylase, chlorophyll A/B binding protein, protochlorophyllide reductase, rRNA, etc. It also controls the expression of its own gene(s) in a negative feedback fashion. The protein is Phytochrome A (PHYA) of Pisum sativum (Garden pea).